A 309-amino-acid chain; its full sequence is Homoserine O-succinyltransferase (309 aa).

Cysteine 142 serves as the catalytic Acyl-thioester intermediate. 2 residues coordinate substrate: lysine 163 and serine 192. The Proton acceptor role is filled by histidine 235. Glutamate 237 is an active-site residue. Arginine 249 serves as a coordination point for substrate.

It belongs to the MetA family. In terms of assembly, homodimer.

It is found in the cytoplasm. It catalyses the reaction L-homoserine + succinyl-CoA = O-succinyl-L-homoserine + CoA. Its pathway is amino-acid biosynthesis; L-methionine biosynthesis via de novo pathway; O-succinyl-L-homoserine from L-homoserine: step 1/1. In terms of biological role, transfers a succinyl group from succinyl-CoA to L-homoserine, forming succinyl-L-homoserine. This Salmonella gallinarum (strain 287/91 / NCTC 13346) protein is Homoserine O-succinyltransferase.